We begin with the raw amino-acid sequence, 350 residues long: Mitochondrial glycine transporter (350 aa).

Solcar repeat units follow at residues 23–107 (SKPK…LRQC), 134–218 (LSHT…SKKN), and 250–334 (SSIS…LILK). The next 6 membrane-spanning stretches (helical) occupy residues 29-54 (FIAG…TRIQ), 82-108 (GTLP…RQCI), 140-165 (LLTG…VRYE), 193-216 (GFGA…EQSK), 254-280 (VNFV…KTRL), and 309-327 (GLGL…AWTV).

Belongs to the mitochondrial carrier (TC 2.A.29) family. SLC25A38 subfamily.

The protein resides in the mitochondrion inner membrane. It carries out the reaction glycine(in) = glycine(out). In terms of biological role, mitochondrial glycine transporter that imports glycine into the mitochondrial matrix. Plays an important role in providing glycine for the first enzymatic step in heme biosynthesis, the condensation of glycine with succinyl-CoA to produce 5-aminolevulinate (ALA) in the mitochondrial matrix. The sequence is that of Mitochondrial glycine transporter from Ajellomyces capsulatus (strain NAm1 / WU24) (Darling's disease fungus).